The primary structure comprises 671 residues: UvrABC system protein C (671 aa).

Residues threonine 16–valine 95 enclose the GIY-YIG domain. Residues lysine 207–valine 242 form the UVR domain.

This sequence belongs to the UvrC family. In terms of assembly, interacts with UvrB in an incision complex.

Its subcellular location is the cytoplasm. Its function is as follows. The UvrABC repair system catalyzes the recognition and processing of DNA lesions. UvrC both incises the 5' and 3' sides of the lesion. The N-terminal half is responsible for the 3' incision and the C-terminal half is responsible for the 5' incision. The polypeptide is UvrABC system protein C (Paenarthrobacter aurescens (strain TC1)).